The primary structure comprises 447 residues: Putative branched-chain amino acid carrier protein SAUSA300_1300 (447 aa).

Transmembrane regions (helical) follow at residues 6–26 (WVIGFTLFAMFFGAGNLIFPP), 40–60 (ILAFVLTGIGLPLLGVIVGAL), 74–94 (PKFSILFLIIIYLTIGPLFAI), 114–134 (SSIALFIFTIIYFIVVLYICL), 143–163 (IGSLLTPLLLITILAMIIKGY), 193–213 (GYLTMDAIAAIAFSMIVVNAV), 229–249 (LTAGLIAAVALIFIYISLGYI), 290–310 (LLGIIVALACLTTACGLIVAV), 326–346 (FVLVFILMSFIIANQGLNAVI), 350–370 (IPVLSIVYPVAITVVLLILIA), 382–402 (IPVIIVFILSIFSVISKLGWL), and 417–437 (LEWFPVAIIATILGYLVGIFV).

It belongs to the branched chain amino acid transporter family.

It localises to the cell membrane. Its function is as follows. Component of the transport system for branched-chain amino acids (leucine, isoleucine and valine), which is coupled to a proton motive force (Potential). Contributes to NaCl tolerance. The sequence is that of Putative branched-chain amino acid carrier protein SAUSA300_1300 from Staphylococcus aureus (strain USA300).